A 299-amino-acid polypeptide reads, in one-letter code: Tyrosine recombinase XerC (299 aa).

Residues 1–85 enclose the Core-binding (CB) domain; it reads MDQHLDAYCM…AVRGFYKYLN (85 aa). Residues 106–285 enclose the Tyr recombinase domain; that stretch reads RLPKTLDTDR…DFQHLATVYD (180 aa). Catalysis depends on residues Arg-146, Lys-170, His-237, Arg-240, and His-263. The active-site O-(3'-phospho-DNA)-tyrosine intermediate is the Tyr-272.

Belongs to the 'phage' integrase family. XerC subfamily. As to quaternary structure, forms a cyclic heterotetrameric complex composed of two molecules of XerC and two molecules of XerD.

The protein localises to the cytoplasm. In terms of biological role, site-specific tyrosine recombinase, which acts by catalyzing the cutting and rejoining of the recombining DNA molecules. The XerC-XerD complex is essential to convert dimers of the bacterial chromosome into monomers to permit their segregation at cell division. It also contributes to the segregational stability of plasmids. In Pseudomonas syringae pv. syringae (strain B728a), this protein is Tyrosine recombinase XerC.